The sequence spans 396 residues: DNA dC-&gt;dU-editing enzyme APOBEC3 (396 aa).

CMP/dCMP-type deaminase domains lie at glycine 38 to alanine 154 and glutamate 205 to leucine 324. Histidine 71 contributes to the Zn(2+) binding site. Glutamate 73 serves as the catalytic Proton donor. Positions 105, 108, 255, 283, and 286 each coordinate Zn(2+).

The protein belongs to the cytidine and deoxycytidylate deaminase family. Homodimer. The cofactor is Zn(2+).

It localises to the cytoplasm. It catalyses the reaction a 2'-deoxycytidine in single-stranded DNA + H2O + H(+) = a 2'-deoxyuridine in single-stranded DNA + NH4(+). In terms of biological role, DNA deaminase (cytidine deaminase) which acts as an inhibitor of retrovirus replication and retrotransposon mobility via deaminase-dependent and -independent mechanisms. Selectively targets single-stranded DNA and does not deaminate double-stranded DNA or single- or double-stranded RNA. In Cricetulus longicaudatus (Long-tailed dwarf hamster), this protein is DNA dC-&gt;dU-editing enzyme APOBEC3 (APOBEC3).